The following is a 359-amino-acid chain: Histidinol-phosphate aminotransferase (359 aa).

Residue K212 is modified to N6-(pyridoxal phosphate)lysine.

Belongs to the class-II pyridoxal-phosphate-dependent aminotransferase family. Histidinol-phosphate aminotransferase subfamily. Homodimer. Pyridoxal 5'-phosphate serves as cofactor.

It catalyses the reaction L-histidinol phosphate + 2-oxoglutarate = 3-(imidazol-4-yl)-2-oxopropyl phosphate + L-glutamate. It participates in amino-acid biosynthesis; L-histidine biosynthesis; L-histidine from 5-phospho-alpha-D-ribose 1-diphosphate: step 7/9. This Buchnera aphidicola subsp. Melaphis rhois protein is Histidinol-phosphate aminotransferase.